A 513-amino-acid chain; its full sequence is MAAEVDSRPRGLPGGGASLGAAREHVQAVTRNYITHPRITYRTVCSVNGPLVVLDQVKFAQYAEIVNFTLPNGTQRSGQVLEVSGTKAIVQVFEGTSGIDAQKTTCEFTGDILRTPVSEDMLGRVFNGSGKPIDKGPVVMAEDFLDINGQPINPHDRIYPEEMIETGISPIDVMNSIARGQKIPIFSAAGLPHNEIAAQICRQAGLVKKSKAVLDYHDDNFAIVFAAMGVNMETARFFKSDFEQNGTMGNVCLFLNLANDPTIERIITPRLALTTAEFLAYQCEKHVLVILTDMSSYAEALREVSAAREEVPGRRGFPGYMYTDLATIYERAGRVEGRGGSITQIPILTMPNDDITHPIPDLTGFITEGQIYVDRQLHNRQIYPPINVLPSLSRLMKSAIGEGMTRKDHGDVSNQLYACYAIGKDVQAMKAVVGEEALTSEDLLYLEFLQKFEKKFINQGPYEKRSVFESLDLGWKLLRTFPKEMLKRIPQNIIDEFFSREGAPQDTEADTAL.

Arg394 serves as a coordination point for ATP. The short motif at 510–513 (DTAL) is the PDZ-binding element.

Belongs to the ATPase alpha/beta chains family. As to quaternary structure, V-ATPase is a heteromultimeric enzyme made up of two complexes: the ATP-hydrolytic V1 complex and the proton translocation V0 complex. The V1 complex consists of three catalytic AB heterodimers that form a heterohexamer, three peripheral stalks each consisting of EG heterodimers, one central rotor including subunits D and F, and the regulatory subunits C and H. The proton translocation complex V0 consists of the proton transport subunit a, a ring of proteolipid subunits c9c'', rotary subunit d, subunits e and f, and the accessory subunits ATP6AP1/Ac45 and ATP6AP2/PRR. Forms a complex with NHERF1 and SCL4A7. As to expression, kidney cortex and medulla.

Its subcellular location is the apical cell membrane. The protein localises to the basolateral cell membrane. Its function is as follows. Non-catalytic subunit of the V1 complex of vacuolar(H+)-ATPase (V-ATPase), a multisubunit enzyme composed of a peripheral complex (V1) that hydrolyzes ATP and a membrane integral complex (V0) that translocates protons. V-ATPase is responsible for acidifying and maintaining the pH of intracellular compartments and in some cell types, is targeted to the plasma membrane, where it is responsible for acidifying the extracellular environment. Essential for the proper assembly and activity of V-ATPase. In renal intercalated cells, mediates secretion of protons (H+) into the urine thereby ensuring correct urinary acidification. Required for optimal olfactory function by mediating the acidification of the nasal olfactory epithelium. The polypeptide is V-type proton ATPase subunit B, kidney isoform (ATP6V1B1) (Bos taurus (Bovine)).